A 160-amino-acid polypeptide reads, in one-letter code: Transcription elongation factor GreA (160 aa).

A coiled-coil region spans residues 4-70 (QKQYPMTQEG…IEQDIQRIEH (67 aa)).

The protein belongs to the GreA/GreB family.

In terms of biological role, necessary for efficient RNA polymerase transcription elongation past template-encoded arresting sites. The arresting sites in DNA have the property of trapping a certain fraction of elongating RNA polymerases that pass through, resulting in locked ternary complexes. Cleavage of the nascent transcript by cleavage factors such as GreA or GreB allows the resumption of elongation from the new 3'terminus. GreA releases sequences of 2 to 3 nucleotides. This is Transcription elongation factor GreA from Staphylococcus carnosus (strain TM300).